Consider the following 378-residue polypeptide: Cytochrome b (378 aa).

The next 4 membrane-spanning stretches (helical) occupy residues 33–53, 77–98, 113–133, and 178–198; these read SGSL…FLSM, WLIR…YFHI, XNVG…GYVL, and FFAF…IHLI. The heme b site is built by histidine 83 and histidine 97. Heme b is bound at residue histidine 196. Residue histidine 201 coordinates a ubiquinone. The next 4 helical transmembrane spans lie at 226–246, 288–308, 320–340, and 347–367; these read FKDL…ALFS, LGGV…PILH, LTQF…WIGG, and FIII…VLFP.

This sequence belongs to the cytochrome b family. In terms of assembly, the cytochrome bc1 complex contains 3 respiratory subunits (MT-CYB, CYC1 and UQCRFS1), 2 core proteins (UQCRC1 and UQCRC2) and probably 6 low-molecular weight proteins. Heme b serves as cofactor.

The protein resides in the mitochondrion inner membrane. Component of the ubiquinol-cytochrome c reductase complex (complex III or cytochrome b-c1 complex) that is part of the mitochondrial respiratory chain. The b-c1 complex mediates electron transfer from ubiquinol to cytochrome c. Contributes to the generation of a proton gradient across the mitochondrial membrane that is then used for ATP synthesis. In Nannacara anomala (Goldeneye cichlid), this protein is Cytochrome b (mt-cyb).